Reading from the N-terminus, the 298-residue chain is Probable endonuclease 4 (298 aa).

Residues histidine 69, histidine 111, glutamate 146, aspartate 180, histidine 183, histidine 215, aspartate 228, histidine 230, and glutamate 260 each coordinate Zn(2+).

It belongs to the AP endonuclease 2 family. It depends on Zn(2+) as a cofactor.

It catalyses the reaction Endonucleolytic cleavage to 5'-phosphooligonucleotide end-products.. In terms of biological role, endonuclease IV plays a role in DNA repair. It cleaves phosphodiester bonds at apurinic or apyrimidinic (AP) sites, generating a 3'-hydroxyl group and a 5'-terminal sugar phosphate. The chain is Probable endonuclease 4 from Bacillus mycoides (strain KBAB4) (Bacillus weihenstephanensis).